A 250-amino-acid polypeptide reads, in one-letter code: Geranylgeranylglyceryl phosphate synthase (250 aa).

2 residues coordinate Mg(2+): aspartate 26 and serine 55. Sn-glycerol 1-phosphate-binding positions include 174–180 (YLEAGSG), 205–206 (GG), and 227–228 (GT).

This sequence belongs to the GGGP/HepGP synthase family. Group II subfamily. It depends on Mg(2+) as a cofactor.

The protein localises to the cytoplasm. The catalysed reaction is sn-glycerol 1-phosphate + (2E,6E,10E)-geranylgeranyl diphosphate = sn-3-O-(geranylgeranyl)glycerol 1-phosphate + diphosphate. It participates in membrane lipid metabolism; glycerophospholipid metabolism. Functionally, prenyltransferase that catalyzes the transfer of the geranylgeranyl moiety of geranylgeranyl diphosphate (GGPP) to the C3 hydroxyl of sn-glycerol-1-phosphate (G1P). This reaction is the first ether-bond-formation step in the biosynthesis of archaeal membrane lipids. This is Geranylgeranylglyceryl phosphate synthase from Nitrosopumilus maritimus (strain SCM1).